Here is a 156-residue protein sequence, read N- to C-terminus: Small ribosomal subunit protein uS7 (156 aa).

The protein belongs to the universal ribosomal protein uS7 family. Part of the 30S ribosomal subunit. Contacts proteins S9 and S11.

One of the primary rRNA binding proteins, it binds directly to 16S rRNA where it nucleates assembly of the head domain of the 30S subunit. Is located at the subunit interface close to the decoding center, probably blocks exit of the E-site tRNA. This Bradyrhizobium diazoefficiens (strain JCM 10833 / BCRC 13528 / IAM 13628 / NBRC 14792 / USDA 110) protein is Small ribosomal subunit protein uS7.